The sequence spans 205 residues: Holliday junction branch migration complex subunit RuvA (205 aa).

Residues 1 to 64 (MIAHLRGELV…EDALTLYGFL (64 aa)) form a domain I region. The segment at 65–143 (TQAEYDLFEL…AVPAGGGGVP (79 aa)) is domain II. A flexible linker region spans residues 144–153 (DGLPVAVAPA). The tract at residues 153 to 205 (AGDAWAEASEALIALGYSRGEAAAALARVRAEAGEAPSVETLVRLALKQLYRG) is domain III.

The protein belongs to the RuvA family. In terms of assembly, homotetramer. Forms an RuvA(8)-RuvB(12)-Holliday junction (HJ) complex. HJ DNA is sandwiched between 2 RuvA tetramers; dsDNA enters through RuvA and exits via RuvB. An RuvB hexamer assembles on each DNA strand where it exits the tetramer. Each RuvB hexamer is contacted by two RuvA subunits (via domain III) on 2 adjacent RuvB subunits; this complex drives branch migration. In the full resolvosome a probable DNA-RuvA(4)-RuvB(12)-RuvC(2) complex forms which resolves the HJ.

Its subcellular location is the cytoplasm. The RuvA-RuvB-RuvC complex processes Holliday junction (HJ) DNA during genetic recombination and DNA repair, while the RuvA-RuvB complex plays an important role in the rescue of blocked DNA replication forks via replication fork reversal (RFR). RuvA specifically binds to HJ cruciform DNA, conferring on it an open structure. The RuvB hexamer acts as an ATP-dependent pump, pulling dsDNA into and through the RuvAB complex. HJ branch migration allows RuvC to scan DNA until it finds its consensus sequence, where it cleaves and resolves the cruciform DNA. This chain is Holliday junction branch migration complex subunit RuvA, found in Symbiobacterium thermophilum (strain DSM 24528 / JCM 14929 / IAM 14863 / T).